Consider the following 397-residue polypeptide: G2/mitotic-specific cyclin-B1 (397 aa).

The protein belongs to the cyclin family. Cyclin AB subfamily. As to quaternary structure, interacts with the cdc2 protein kinase to form a serine/threonine kinase holoenzyme complex also known as maturation promoting factor (MPF). The cyclin subunit imparts substrate specificity to the complex. When not in a complex with cdc2, interacts with spdya. Interacts with nap1l1. Interacts with nanos1.

Its subcellular location is the cytoplasm. It localises to the cytoskeleton. The protein resides in the microtubule organizing center. The protein localises to the centrosome. It is found in the nucleus. Its function is as follows. Essential for the control of the cell cycle at the G2/M (mitosis) transition. This Xenopus laevis (African clawed frog) protein is G2/mitotic-specific cyclin-B1 (ccnb1).